The primary structure comprises 193 residues: Potassium-transporting ATPase KdpC subunit (193 aa).

The helical transmembrane segment at 14–34 threads the bilayer; it reads ITFTFLVLCGLVYPLIVTGIA.

It belongs to the KdpC family. As to quaternary structure, the system is composed of three essential subunits: KdpA, KdpB and KdpC.

It localises to the cell membrane. In terms of biological role, part of the high-affinity ATP-driven potassium transport (or Kdp) system, which catalyzes the hydrolysis of ATP coupled with the electrogenic transport of potassium into the cytoplasm. This subunit acts as a catalytic chaperone that increases the ATP-binding affinity of the ATP-hydrolyzing subunit KdpB by the formation of a transient KdpB/KdpC/ATP ternary complex. In Bacillus cereus (strain ATCC 14579 / DSM 31 / CCUG 7414 / JCM 2152 / NBRC 15305 / NCIMB 9373 / NCTC 2599 / NRRL B-3711), this protein is Potassium-transporting ATPase KdpC subunit.